The chain runs to 1164 residues: DNA-directed RNA polymerase 132 kDa polypeptide (1164 aa).

It belongs to the RNA polymerase beta chain family. As to quaternary structure, the DNA-dependent RNA polymerase used for intermediate and late genes expression consists of eight subunits (147) kDa, (133) kDa, (35) kDa, (30) kDa, (22) kDa, (19) kDa, (18) kDa and (7) kDa totalling more than 500 kDa in mass. The same holoenzyme, with the addition of the transcription-specificity factor RAP94, is used for early gene expression.

The protein localises to the virion. It catalyses the reaction RNA(n) + a ribonucleoside 5'-triphosphate = RNA(n+1) + diphosphate. Functionally, part of the DNA-dependent RNA polymerase which catalyzes the transcription of viral DNA into RNA using the four ribonucleoside triphosphates as substrates. Responsible for the transcription of early, intermediate and late genes. DNA-dependent RNA polymerase associates with the early transcription factor (ETF), itself composed of D6 and A7, thereby allowing the early genes transcription. Late transcription, and probably also intermediate transcription, require newly synthesized RNA polymerase. This chain is DNA-directed RNA polymerase 132 kDa polypeptide (RPO132), found in Bos taurus (Bovine).